Here is a 534-residue protein sequence, read N- to C-terminus: GMP synthase [glutamine-hydrolyzing] (534 aa).

The Glutamine amidotransferase type-1 domain occupies 20–210 (PVLVIDFGAQ…LLVGAGCRPS (191 aa)). Cys97 serves as the catalytic Nucleophile. Residues His184 and Glu186 contribute to the active site. A GMPS ATP-PPase domain is found at 211 to 408 (WTMINIVEEA…LGLPEDIVWR (198 aa)). 238–244 (SGGVDSA) provides a ligand contact to ATP.

Homodimer.

The enzyme catalyses XMP + L-glutamine + ATP + H2O = GMP + L-glutamate + AMP + diphosphate + 2 H(+). It participates in purine metabolism; GMP biosynthesis; GMP from XMP (L-Gln route): step 1/1. Catalyzes the synthesis of GMP from XMP. This chain is GMP synthase [glutamine-hydrolyzing], found in Parafrankia sp. (strain EAN1pec).